Consider the following 257-residue polypeptide: MNQLNHPYHLVNISPWPLATGMGAFAMTSGLVKWFHSFDSMLFFTGINNNHICFDQWWRDVSREATFQGMHSTKVGFGLRWGMILFIISEVFFFVSFFWGFFHSSLSPNIEVGALWPPSEVESFLSALLNTSILLASGVTVTWAHHALMENNFDQCLQGLLFTVLLGLYFSFLQGLEYMEASFTIADSIYGSTFFLATGFHGLHVLIGTIFLMICILRHAKCYFSQHHFGFEAAAWYWHFVDVVWLFLYLSIYWWGE.

6 helical membrane-spanning segments follow: residues Pro-15–Phe-35, Gly-82–Phe-102, Phe-124–Ala-144, Cys-156–Leu-176, Phe-194–Ile-214, and Ala-235–Trp-255.

It belongs to the cytochrome c oxidase subunit 3 family. Component of the cytochrome c oxidase (complex IV, CIV), a multisubunit enzyme composed of a catalytic core of 3 subunits and several supernumerary subunits. The complex exists as a monomer or a dimer and forms supercomplexes (SCs) in the inner mitochondrial membrane with ubiquinol-cytochrome c oxidoreductase (cytochrome b-c1 complex, complex III, CIII).

It is found in the mitochondrion inner membrane. The enzyme catalyses 4 Fe(II)-[cytochrome c] + O2 + 8 H(+)(in) = 4 Fe(III)-[cytochrome c] + 2 H2O + 4 H(+)(out). In terms of biological role, component of the cytochrome c oxidase, the last enzyme in the mitochondrial electron transport chain which drives oxidative phosphorylation. The respiratory chain contains 3 multisubunit complexes succinate dehydrogenase (complex II, CII), ubiquinol-cytochrome c oxidoreductase (cytochrome b-c1 complex, complex III, CIII) and cytochrome c oxidase (complex IV, CIV), that cooperate to transfer electrons derived from NADH and succinate to molecular oxygen, creating an electrochemical gradient over the inner membrane that drives transmembrane transport and the ATP synthase. Cytochrome c oxidase is the component of the respiratory chain that catalyzes the reduction of oxygen to water. Electrons originating from reduced cytochrome c in the intermembrane space (IMS) are transferred via the dinuclear copper A center (CU(A)) of subunit 2 and heme A of subunit 1 to the active site in subunit 1, a binuclear center (BNC) formed by heme A3 and copper B (CU(B)). The BNC reduces molecular oxygen to 2 water molecules using 4 electrons from cytochrome c in the IMS and 4 protons from the mitochondrial matrix. This Artemia franciscana (Brine shrimp) protein is Cytochrome c oxidase subunit 3 (COIII).